The sequence spans 241 residues: Small ribosomal subunit protein uS2 (241 aa).

Belongs to the universal ribosomal protein uS2 family.

This is Small ribosomal subunit protein uS2 from Hamiltonella defensa subsp. Acyrthosiphon pisum (strain 5AT).